Reading from the N-terminus, the 99-residue chain is Large ribosomal subunit protein uL23 (99 aa).

The protein belongs to the universal ribosomal protein uL23 family. As to quaternary structure, part of the 50S ribosomal subunit. Contacts protein L29, and trigger factor when it is bound to the ribosome.

In terms of biological role, one of the early assembly proteins it binds 23S rRNA. One of the proteins that surrounds the polypeptide exit tunnel on the outside of the ribosome. Forms the main docking site for trigger factor binding to the ribosome. This Xanthomonas axonopodis pv. citri (strain 306) protein is Large ribosomal subunit protein uL23.